The sequence spans 162 residues: Small ribosomal subunit protein uS12m (162 aa).

A mitochondrion-targeting transit peptide spans Met1–Leu37.

It belongs to the universal ribosomal protein uS12 family. Component of the mitochondrial small ribosomal subunit (mt-SSU). Mature yeast 74S mitochondrial ribosomes consist of a small (37S) and a large (54S) subunit. The 37S small subunit contains a 15S ribosomal RNA (15S mt-rRNA) and at least 32 different proteins. The 54S large subunit contains a 21S rRNA (21S mt-rRNA) and at least 45 different proteins. uS12m forms part of the decoding center of the mt-SSU.

It is found in the mitochondrion. Component of the mitochondrial ribosome (mitoribosome), a dedicated translation machinery responsible for the synthesis of mitochondrial genome-encoded proteins, including at least some of the essential transmembrane subunits of the mitochondrial respiratory chain. The mitoribosomes are attached to the mitochondrial inner membrane and translation products are cotranslationally integrated into the membrane. uS12m is required for respiratory growth. This chain is Small ribosomal subunit protein uS12m, found in Schizosaccharomyces pombe (strain 972 / ATCC 24843) (Fission yeast).